The chain runs to 469 residues: MSYSAADNLQDSFQRAMNFSGSPGAVSTSPTQSFMNTLPRRVSITKQPKALKPFSTGDMNILLLENVNATAIKIFKDQGYQVEFHKSSLPEDELIEKIKDVHAIGIRSKTRLTEKILQHARNLVCIGCFCIGTNQVDLKYAASKGIAVFNSPFSNSRSVAELVIGEIISLARQLGDRSIELHTGTWNKVAARCWEVRGKTLGIIGYGHIGSQLSVLAEAMGLHVLYYDIVTIMALGTARQVSTLDELLNKSDFVTLHVPATPETEKMLSAPQFAAMKDGAYVINASRGTVVDIPSLIQAVKANKIAGAALDVYPHEPAKNGEGSFNDELNSWTSELVSLPNIILTPHIGGSTEEAQSSIGIEVATALSKYINEGNSVGSVNFPEVSLKSLDYDQENTVRVLYIHRNVPGVLKTVNDILSDHNIEKQFSDSHGEIAYLMADISSVNQSEIKDIYEKLNQTSAKVSIRLLY.

Ser2 carries the N-acetylserine modification. 3 positions are modified to phosphoserine: Ser22, Ser29, and Ser33. NAD(+) contacts are provided by residues His208–Ile209, Asp228, Ala285–Arg287, and Asp311. Residue Arg287 is part of the active site. The active site involves Glu316. Catalysis depends on His347, which acts as the Proton donor. An NAD(+)-binding site is contributed by His347–Gly350. The region spanning Arg399–Tyr469 is the ACT domain.

This sequence belongs to the D-isomer specific 2-hydroxyacid dehydrogenase family.

It carries out the reaction (2R)-3-phosphoglycerate + NAD(+) = 3-phosphooxypyruvate + NADH + H(+). The catalysed reaction is (R)-2-hydroxyglutarate + NAD(+) = 2-oxoglutarate + NADH + H(+). It functions in the pathway amino-acid biosynthesis; L-serine biosynthesis; L-serine from 3-phospho-D-glycerate: step 1/3. Its function is as follows. Catalyzes the reversible oxidation of 3-phospho-D-glycerate to 3-phosphonooxypyruvate, the first step of the phosphorylated L-serine biosynthesis pathway. Also catalyzes the reversible oxidation of 2-hydroxyglutarate to 2-oxoglutarate. The sequence is that of D-3-phosphoglycerate dehydrogenase 2 (SER33) from Saccharomyces cerevisiae (strain ATCC 204508 / S288c) (Baker's yeast).